Here is a 122-residue protein sequence, read N- to C-terminus: Large ribosomal subunit protein uL14c (122 aa).

Belongs to the universal ribosomal protein uL14 family. In terms of assembly, part of the 50S ribosomal subunit.

It localises to the plastid. The protein resides in the chloroplast. Binds to 23S rRNA. In Pinus koraiensis (Korean pine), this protein is Large ribosomal subunit protein uL14c.